The following is a 105-amino-acid chain: Large ribosomal subunit protein uL24 (105 aa).

Belongs to the universal ribosomal protein uL24 family. In terms of assembly, part of the 50S ribosomal subunit.

In terms of biological role, one of two assembly initiator proteins, it binds directly to the 5'-end of the 23S rRNA, where it nucleates assembly of the 50S subunit. Functionally, one of the proteins that surrounds the polypeptide exit tunnel on the outside of the subunit. This is Large ribosomal subunit protein uL24 from Clostridium novyi (strain NT).